The following is a 148-amino-acid chain: MELILLEKIANLGNLGDKVNVKAGYGRNYLLPFGKATAATAANLAAFEARRAELEKLAAEKKASAETRAAQLAELEVTITATAGDEGKLFGSIGTHDIADALTASGVEVAKSEVRLPNGTIRNVGEFDVAVHLHAEVEATVRVVVVAA.

The protein belongs to the bacterial ribosomal protein bL9 family.

In terms of biological role, binds to the 23S rRNA. The polypeptide is Large ribosomal subunit protein bL9 (Pseudomonas fluorescens (strain ATCC BAA-477 / NRRL B-23932 / Pf-5)).